Consider the following 338-residue polypeptide: Heat shock factor 2-binding protein (338 aa).

The interval 1-20 (MAATVGDGSGTEEACRNMES) is disordered. The stretch at 12-126 (EEACRNMESK…LLQQAEYCTQ (115 aa)) forms a coiled coil. Residues 18–55 (MESKEEFVKVRKKDLERLTTEVMQIRDFLPRILNGELL) form an interaction with BRME1 region. The segment at 87 to 338 (ARLETAQADS…EDLRALDCNV (252 aa)) is interaction with BRCA2.

Interacts (via C-terminus) with BNC1. Associates with HSF2. The interaction seems to occur between the trimerization domain of HSF2 and the N-terminal hydrophilic region of HSF2BP. Interacts (via N-terminus) with BRME1. Interacts with BRCA2 and BRME1; the interactions are direct and allow the formation of a ternary complex. The complex BRME1:HSF2BP:BRCA2 interacts with SPATA22, MEIOB and RAD51. In terms of processing, sumoylated by UBE2I in response to MEKK1-mediated stimuli. Expressed in testis and, to a lesser extent, in lung and muscle.

It localises to the cytoplasm. Its subcellular location is the chromosome. Functionally, meiotic recombination factor component of recombination bridges involved in meiotic double-strand break repair. Modulates the localization of recombinases DMC1:RAD51 to meiotic double-strand break (DSB) sites through the interaction with BRCA2 and its recruitment during meiotic recombination. Indispensable for the DSB repair, homologous synapsis, and crossover formation that are needed for progression past metaphase I, is essential for spermatogenesis and male fertility. Required for proper recombinase recruitment in female meiosis. Inhibits BNC1 transcriptional activity during spermatogenesis, probably by sequestering it in the cytoplasm. May be involved in modulating HSF2 activation in testis. The protein is Heat shock factor 2-binding protein of Mus musculus (Mouse).